Consider the following 351-residue polypeptide: MRILVNGGGPAGMAFAMFAARSGRGDEITVRDWTGPGDTYGFGVILPPAAVEVFRDAEPDLADELNSHITAWDRLSVHRHGRTASIPAPRLGAMDRRTLLKVLRRRCAERGVRFEHGAVDPALGDHDLVVAADGARSVTRRHRAAAFGTTTREIGPAYIWLGADRALEHLRFLVAETPDGPAVAHAYPYSPDRSTFLVEADGAPPPAVLAEWFAGPLGGARLLENRSRWSRFQEIHNRTWSAGNVVLIGDAAHTAHYSIGSGTRLALDDARALADALCAQPRLADALKGYEDARRPIVEHTQRIGRLSATWFTRLPDVPMERLLDDLATRGGQISWRDLATEGSGAVPVRG.

Belongs to the aromatic-ring hydroxylase family. It depends on FAD as a cofactor.

The catalysed reaction is 3-hydroxy-4-methylanthranilyl-[aryl-carrier protein] + NADH + O2 + H(+) = 3,5-dihydroxy-4-methylanthranilyl-[aryl-carrier protein] + NAD(+) + H2O. It participates in antibiotic biosynthesis. Its function is as follows. Involved in the biosynthesis of the antitumor antibiotic sibiromycin. Hydroxylates the C5 position of the peptidyl carrier protein (PCP)-bound 4-methyl-3-hydroxyanthranilic acid (4-MHA or 3H4MAA), leading to the formation of the fully substituted anthranilate moiety found in sibiromycin. The chain is 3-hydroxy-4-methyl-anthranilyl-[aryl-carrier protein] 5-monooxygenase from Streptosporangium sibiricum.